Consider the following 355-residue polypeptide: Probable zinc transporter 12 (355 aa).

An N-terminal signal peptide occupies residues 1–25 (MSRFRKTLVSAFVLCLVIFPLLVSA). Over 26 to 50 (AEEENQCGGSKGGSAAEKASALKYK) the chain is Extracellular. Residues 51–71 (IIAFFSILIAGVFGVCLPIFG) form a helical membrane-spanning segment. The Cytoplasmic segment spans residues 72–77 (LKTESN). Residues 78–98 (FFMYVKAFAAGVILATGFVHI) traverse the membrane as a helical segment. Topologically, residues 99–116 (LPDATESLTSSCLGEEPP) are extracellular. The helical transmembrane segment at 117–137 (WGDFPMTGLVAMAASILTMLI) threads the bilayer. The Cytoplasmic portion of the chain corresponds to 138 to 200 (ESFASGYLNR…DDDHIDMRKK (63 aa)). The interval 156-183 (TLPVSTGGEEEHAHTGSAHTHASQGHSH) is disordered. A helical transmembrane segment spans residues 201–221 (IVTQILELGIVVHSVIIGISL). Over 222 to 231 (GASPSVSTIK) the chain is Extracellular. Residues 232 to 252 (PLIAAITFHQLFEGFGLGGCI) traverse the membrane as a helical segment. Residues 253–261 (SEAKFRVKK) are Cytoplasmic-facing. Residues 262–282 (IWVMLMFFALTAPIGIGIGIG) traverse the membrane as a helical segment. At 283-302 (VAEIYNENSPMALKVSGFLN) the chain is on the extracellular side. Residues 303–323 (ATASGILIYMALVDLVAPLFM) form a helical membrane-spanning segment. At 324-334 (NQKTQSSMKIQ) the chain is on the cytoplasmic side. A helical membrane pass occupies residues 335-355 (VACSVSLVVGAGLMSLLAIWA).

Belongs to the ZIP transporter (TC 2.A.5) family.

Its subcellular location is the cell membrane. Functionally, zinc transporter involved in zinc uptake in roots. Targeted by BZIP23 transcription factor in response to zinc-deficient conditions. This chain is Probable zinc transporter 12 (ZIP12), found in Arabidopsis thaliana (Mouse-ear cress).